The chain runs to 622 residues: Condensin-2 complex subunit H2 (622 aa).

Phosphothreonine is present on Thr-19. 4 positions are modified to phosphoserine: Ser-95, Ser-199, Ser-223, and Ser-227. The disordered stretch occupies residues Trp-207–Ala-354. Low complexity predominate over residues Ala-262 to Val-273. The residue at position 282 (Ser-282) is a Phosphoserine. Residues Thr-294–Pro-312 are compositionally biased toward basic and acidic residues.

This sequence belongs to the CND2 H2 (condensin-2 subunit 2) family. In terms of assembly, component of the condensin-2 complex, which contains the SMC2 and SMC4 heterodimer, and three non SMC subunits, NCAPG2, NCAPH2 and NCAPD3 that probably regulate the complex.

The protein resides in the nucleus. In terms of biological role, regulatory subunit of the condensin-2 complex, a complex that seems to provide chromosomes with an additional level of organization and rigidity and in establishing mitotic chromosome architecture. May promote the resolution of double-strand DNA catenanes (intertwines) between sister chromatids. Condensin-mediated compaction likely increases tension in catenated sister chromatids, providing directionality for type II topoisomerase-mediated strand exchanges toward chromatid decatenation. Required for decatenation of chromatin bridges at anaphase. Early in neurogenesis, may play an essential role to ensure accurate mitotic chromosome condensation in neuron stem cells, ultimately affecting neuron pool and cortex size. Seems to have lineage-specific role in T-cell development. This is Condensin-2 complex subunit H2 (NCAPH2) from Bos taurus (Bovine).